An 88-amino-acid chain; its full sequence is Small ribosomal subunit protein uS17 (88 aa).

Belongs to the universal ribosomal protein uS17 family. As to quaternary structure, part of the 30S ribosomal subunit.

Its function is as follows. One of the primary rRNA binding proteins, it binds specifically to the 5'-end of 16S ribosomal RNA. The protein is Small ribosomal subunit protein uS17 of Yersinia pseudotuberculosis serotype O:1b (strain IP 31758).